A 648-amino-acid chain; its full sequence is S-M checkpoint control protein rad4 (648 aa).

BRCT domains lie at 2–92 (GSSK…DDGL) and 96–185 (KHFL…YFQL). A Nuclear localization signal motif is present at residues 242 to 249 (KRGKKRDR). 2 consecutive BRCT domains span residues 298–384 (NEAK…EHAL) and 392–486 (SLVP…SPWA). Ser592 carries the phosphoserine modification. The Nuclear localization signal signature appears at 643–648 (RKLRRR).

Interacts with drc1/sld2. Interacts (via BRCT1,2 domains) with crb2; a single rad4 molecule interacts simultaneously with both 'Thr-187' phosphorylation sites in a crb2 dimer.

Its subcellular location is the nucleus. In terms of biological role, essential component for DNA replication and also the checkpoint control system which couples S and M phases. May directly or indirectly interact with chromatin proteins to form the complex required for the initiation and/or progression of DNA synthesis. Interacts simultaneously with both 'Thr-187' phosphorylation sites in a crb2 dimer for establishing the DNA checkpoint. This is S-M checkpoint control protein rad4 (rad4) from Schizosaccharomyces pombe (strain 972 / ATCC 24843) (Fission yeast).